The primary structure comprises 395 residues: MMILGNLRVATLSDGYGLIPDAAILIEGGRIQWVGPEAHLPPSAAPRHDMGGRLCTPALIDCHTHAVFAGTRAAEFEMRLKGASYAEVAAAGGGIVSTVTATRAASADELLAASLPRIDAMLAGGVGTVEIKSGYGLDIETELRMLRVARRIGELRKVRVRTSFLGAHAVPPDYRGRPDAYLAEVVLPALKVAQDEGLVDAVDGFCEGIAFSPAQIAHLFAQAHKLRLPVKLHAEQLSNLGGAALAARHDALSADHLEYLDAEGVAALAAAGTVAVLLPGAFYALRETQAPPVAALRAAGVPMAVATDLNPGTSPLGALGLAMNMACTLFRLTPEEALAGTTIHAARALGLSDTGRIAPGFRADLAIWEAEHPAELSWRIGPAPLHARLHEGEFV.

Residues His63 and His65 each coordinate Fe(3+). Zn(2+)-binding residues include His63 and His65. 4-imidazolone-5-propanoate is bound by residues Arg72, Tyr135, and His168. Tyr135 contacts N-formimidoyl-L-glutamate. His233 contacts Fe(3+). His233 provides a ligand contact to Zn(2+). Gln236 contributes to the 4-imidazolone-5-propanoate binding site. Residue Asp308 coordinates Fe(3+). Asp308 provides a ligand contact to Zn(2+). N-formimidoyl-L-glutamate is bound by residues Asn310 and Gly312. Position 313 (Thr313) interacts with 4-imidazolone-5-propanoate.

This sequence belongs to the metallo-dependent hydrolases superfamily. HutI family. The cofactor is Zn(2+). Requires Fe(3+) as cofactor.

The protein localises to the cytoplasm. It carries out the reaction 4-imidazolone-5-propanoate + H2O = N-formimidoyl-L-glutamate. Its pathway is amino-acid degradation; L-histidine degradation into L-glutamate; N-formimidoyl-L-glutamate from L-histidine: step 3/3. Its function is as follows. Catalyzes the hydrolytic cleavage of the carbon-nitrogen bond in imidazolone-5-propanoate to yield N-formimidoyl-L-glutamate. It is the third step in the universal histidine degradation pathway. In Cereibacter sphaeroides (strain ATCC 17029 / ATH 2.4.9) (Rhodobacter sphaeroides), this protein is Imidazolonepropionase.